The chain runs to 288 residues: uncharacterized protein (288 aa).

2 disordered regions span residues 31–52 and 179–288; these read KAVD…EAPS and YPSK…VELK. Residues 206–217 show a composition bias toward polar residues; that stretch reads RPSSPTNFSKLI. Residues 221-236 are compositionally biased toward basic and acidic residues; sequence YKDEWLQQQADSDKRA. 2 stretches are compositionally biased toward low complexity: residues 237–249 and 267–276; these read PQTP…SPSP and AAESSPLSSA.

This is an uncharacterized protein from Bos taurus (Bovine).